The sequence spans 254 residues: Thiazole synthase (254 aa).

The active-site Schiff-base intermediate with DXP is the Lys95. Residues Gly156, 182-183 (AG), and 204-205 (NT) contribute to the 1-deoxy-D-xylulose 5-phosphate site.

It belongs to the ThiG family. In terms of assembly, homotetramer. Forms heterodimers with either ThiH or ThiS.

Its subcellular location is the cytoplasm. It carries out the reaction [ThiS sulfur-carrier protein]-C-terminal-Gly-aminoethanethioate + 2-iminoacetate + 1-deoxy-D-xylulose 5-phosphate = [ThiS sulfur-carrier protein]-C-terminal Gly-Gly + 2-[(2R,5Z)-2-carboxy-4-methylthiazol-5(2H)-ylidene]ethyl phosphate + 2 H2O + H(+). It participates in cofactor biosynthesis; thiamine diphosphate biosynthesis. Its function is as follows. Catalyzes the rearrangement of 1-deoxy-D-xylulose 5-phosphate (DXP) to produce the thiazole phosphate moiety of thiamine. Sulfur is provided by the thiocarboxylate moiety of the carrier protein ThiS. In vitro, sulfur can be provided by H(2)S. The chain is Thiazole synthase from Shewanella oneidensis (strain ATCC 700550 / JCM 31522 / CIP 106686 / LMG 19005 / NCIMB 14063 / MR-1).